A 300-amino-acid chain; its full sequence is Porphobilinogen deaminase (300 aa).

Residue cysteine 239 is modified to S-(dipyrrolylmethanemethyl)cysteine.

The protein belongs to the HMBS family. In terms of assembly, monomer. Dipyrromethane serves as cofactor.

It carries out the reaction 4 porphobilinogen + H2O = hydroxymethylbilane + 4 NH4(+). It participates in porphyrin-containing compound metabolism; protoporphyrin-IX biosynthesis; coproporphyrinogen-III from 5-aminolevulinate: step 2/4. Its function is as follows. Tetrapolymerization of the monopyrrole PBG into the hydroxymethylbilane pre-uroporphyrinogen in several discrete steps. The chain is Porphobilinogen deaminase from Francisella tularensis subsp. novicida (strain U112).